The following is a 335-amino-acid chain: Phosphate acyltransferase (335 aa).

It belongs to the PlsX family. Homodimer. Probably interacts with PlsY.

The protein localises to the cytoplasm. It catalyses the reaction a fatty acyl-[ACP] + phosphate = an acyl phosphate + holo-[ACP]. It participates in lipid metabolism; phospholipid metabolism. Functionally, catalyzes the reversible formation of acyl-phosphate (acyl-PO(4)) from acyl-[acyl-carrier-protein] (acyl-ACP). This enzyme utilizes acyl-ACP as fatty acyl donor, but not acyl-CoA. The sequence is that of Phosphate acyltransferase from Streptococcus suis (strain 98HAH33).